Here is a 139-residue protein sequence, read N- to C-terminus: Lamprin 0.9 (139 aa).

A signal peptide spans 1 to 19; that stretch reads MAAAIQALLVLALLHLATA. A run of 8 repeats spans residues 42–46, 47–51, 52–56, 57–61, 62–66, 67–71, 92–96, and 106–110. The segment at 42–110 is 8 X 5 AA approximate repeats; sequence GGLGYGGLGY…YHHALGGLGY (69 aa).

In terms of assembly, the polymeric lamprin chains self-aggregate to form fibers and have secondary structures particularly rich in beta-sheets and in beta-turns.

It is found in the secreted. The protein resides in the extracellular space. The protein localises to the extracellular matrix. Self-aggregating protein that is part of the soluble form of lamprin. This chain is Lamprin 0.9, found in Petromyzon marinus (Sea lamprey).